Reading from the N-terminus, the 265-residue chain is MNTYAQESKLRLKTKIGADGRCVIEDNFFTPPFKLMAPFYPKDDLAEIMLLAVSPGLMKGDAQDMQLNIGPNCKLRITSQSFEKIHNTEDGFASRDMHIVVGENAFLDFAPFPLIPFENAHFKGNTTISLRSSSQLLYSEIIVAGRVARNELFKFNRLHTKISILQDEKPIYYDNTILDPKTTNMNNMCMFDGYTHYLNLVLVNCPIELSGARELIEESEGVDGAVSKIASSHLCLKALAKGSEPLLHLREKIARLVTQTTTQKV.

Belongs to the UreD family. In terms of assembly, ureH, UreF and UreG form a complex that acts as a GTP-hydrolysis-dependent molecular chaperone, activating the urease apoprotein by helping to assemble the nickel containing metallocenter of UreC. The UreE protein probably delivers the nickel.

It localises to the cytoplasm. Its function is as follows. Required for maturation of urease via the functional incorporation of the urease nickel metallocenter. This Helicobacter pylori (strain J99 / ATCC 700824) (Campylobacter pylori J99) protein is Urease accessory protein UreH.